The sequence spans 404 residues: S-adenosylmethionine synthase (404 aa).

Positions 1-13 are enriched in polar residues; it reads MSQSRYFFTSESV. Residues 1-20 are disordered; sequence MSQSRYFFTSESVSEGHPDK. ATP is bound at residue histidine 17. Aspartate 19 provides a ligand contact to Mg(2+). Glutamate 45 contributes to the K(+) binding site. Glutamate 58 and glutamine 101 together coordinate L-methionine. The interval 101 to 111 is flexible loop; the sequence is QSPDINRGVDR. ATP-binding positions include 172–174, 245–246, aspartate 254, 260–261, alanine 277, and lysine 281; these read DAK, RF, and RK. Residue aspartate 254 participates in L-methionine binding. Lysine 285 contacts L-methionine.

This sequence belongs to the AdoMet synthase family. In terms of assembly, homotetramer; dimer of dimers. Mg(2+) is required as a cofactor. Requires K(+) as cofactor.

It is found in the cytoplasm. It carries out the reaction L-methionine + ATP + H2O = S-adenosyl-L-methionine + phosphate + diphosphate. Its pathway is amino-acid biosynthesis; S-adenosyl-L-methionine biosynthesis; S-adenosyl-L-methionine from L-methionine: step 1/1. In terms of biological role, catalyzes the formation of S-adenosylmethionine (AdoMet) from methionine and ATP. The overall synthetic reaction is composed of two sequential steps, AdoMet formation and the subsequent tripolyphosphate hydrolysis which occurs prior to release of AdoMet from the enzyme. This chain is S-adenosylmethionine synthase, found in Chlorobium limicola (strain DSM 245 / NBRC 103803 / 6330).